The chain runs to 633 residues: Pentatricopeptide repeat-containing protein At1g43980, mitochondrial (633 aa).

A mitochondrion-targeting transit peptide spans 1 to 30 (MFQLLRRAHGLCMPSSLYFSRLVNRSLLSK). PPR repeat units lie at residues 50 to 80 (TTYW…IPDK), 81 to 111 (NTIT…MPER), 112 to 146 (DVVS…EIRP), 147 to 178 (TEFT…GVSR), 180 to 210 (NLVV…MEDR), 211 to 245 (DVVS…EIQP), 246 to 280 (DEYT…GFLS), 281 to 311 (NSIV…LEKW), 312 to 346 (DSVL…SVRP), 347 to 380 (DKFT…GFDL), 381 to 411 (DTAV…TDGK), 412 to 447 (DLIF…SLKP), 448 to 483 (DRVT…GVNP), and 484 to 514 (GNEH…IPFE). Residues 519–594 (IWEPILCASL…AQGSSKISIE (76 aa)) are type E motif.

The protein belongs to the PPR family. PCMP-E subfamily.

It localises to the mitochondrion. The protein is Pentatricopeptide repeat-containing protein At1g43980, mitochondrial (PCMP-E58) of Arabidopsis thaliana (Mouse-ear cress).